The chain runs to 449 residues: UDP-N-acetylmuramoylalanine--D-glutamate ligase (449 aa).

118–124 is a binding site for ATP; the sequence is GTNGKTT.

Belongs to the MurCDEF family.

Its subcellular location is the cytoplasm. The catalysed reaction is UDP-N-acetyl-alpha-D-muramoyl-L-alanine + D-glutamate + ATP = UDP-N-acetyl-alpha-D-muramoyl-L-alanyl-D-glutamate + ADP + phosphate + H(+). Its pathway is cell wall biogenesis; peptidoglycan biosynthesis. In terms of biological role, cell wall formation. Catalyzes the addition of glutamate to the nucleotide precursor UDP-N-acetylmuramoyl-L-alanine (UMA). The polypeptide is UDP-N-acetylmuramoylalanine--D-glutamate ligase (Staphylococcus aureus (strain MSSA476)).